The following is a 321-amino-acid chain: Tetraacyldisaccharide 4'-kinase (321 aa).

An ATP-binding site is contributed by 54-61; that stretch reads SVGGTGKT.

This sequence belongs to the LpxK family.

It catalyses the reaction a lipid A disaccharide + ATP = a lipid IVA + ADP + H(+). It participates in glycolipid biosynthesis; lipid IV(A) biosynthesis; lipid IV(A) from (3R)-3-hydroxytetradecanoyl-[acyl-carrier-protein] and UDP-N-acetyl-alpha-D-glucosamine: step 6/6. Its function is as follows. Transfers the gamma-phosphate of ATP to the 4'-position of a tetraacyldisaccharide 1-phosphate intermediate (termed DS-1-P) to form tetraacyldisaccharide 1,4'-bis-phosphate (lipid IVA). The sequence is that of Tetraacyldisaccharide 4'-kinase from Rickettsia peacockii (strain Rustic).